We begin with the raw amino-acid sequence, 226 residues long: Phosphoglycolate phosphatase (226 aa).

The active-site Nucleophile is aspartate 12. The Mg(2+) site is built by aspartate 12, aspartate 14, and aspartate 177.

The protein belongs to the HAD-like hydrolase superfamily. CbbY/CbbZ/Gph/YieH family. Mg(2+) is required as a cofactor.

It carries out the reaction 2-phosphoglycolate + H2O = glycolate + phosphate. The protein operates within organic acid metabolism; glycolate biosynthesis; glycolate from 2-phosphoglycolate: step 1/1. Specifically catalyzes the dephosphorylation of 2-phosphoglycolate. Is involved in the dissimilation of the intracellular 2-phosphoglycolate formed during the DNA repair of 3'-phosphoglycolate ends, a major class of DNA lesions induced by oxidative stress. This is Phosphoglycolate phosphatase from Colwellia psychrerythraea (strain 34H / ATCC BAA-681) (Vibrio psychroerythus).